Here is a 338-residue protein sequence, read N- to C-terminus: N-acetyl-gamma-glutamyl-phosphate reductase (338 aa).

C148 is an active-site residue.

Belongs to the NAGSA dehydrogenase family. Type 1 subfamily.

The protein localises to the cytoplasm. The enzyme catalyses N-acetyl-L-glutamate 5-semialdehyde + phosphate + NADP(+) = N-acetyl-L-glutamyl 5-phosphate + NADPH + H(+). Its pathway is amino-acid biosynthesis; L-arginine biosynthesis; N(2)-acetyl-L-ornithine from L-glutamate: step 3/4. Its function is as follows. Catalyzes the NADPH-dependent reduction of N-acetyl-5-glutamyl phosphate to yield N-acetyl-L-glutamate 5-semialdehyde. This Leptospira interrogans serogroup Icterohaemorrhagiae serovar copenhageni (strain Fiocruz L1-130) protein is N-acetyl-gamma-glutamyl-phosphate reductase.